A 295-amino-acid chain; its full sequence is Bifunctional protein FolD (295 aa).

NADP(+) is bound by residues 169 to 171, S194, and I235; that span reads GRS.

This sequence belongs to the tetrahydrofolate dehydrogenase/cyclohydrolase family. In terms of assembly, homodimer.

It catalyses the reaction (6R)-5,10-methylene-5,6,7,8-tetrahydrofolate + NADP(+) = (6R)-5,10-methenyltetrahydrofolate + NADPH. It carries out the reaction (6R)-5,10-methenyltetrahydrofolate + H2O = (6R)-10-formyltetrahydrofolate + H(+). It functions in the pathway one-carbon metabolism; tetrahydrofolate interconversion. Catalyzes the oxidation of 5,10-methylenetetrahydrofolate to 5,10-methenyltetrahydrofolate and then the hydrolysis of 5,10-methenyltetrahydrofolate to 10-formyltetrahydrofolate. In Acaryochloris marina (strain MBIC 11017), this protein is Bifunctional protein FolD.